The sequence spans 588 residues: Probable metalloprotease ARX1 (588 aa).

The protein belongs to the peptidase M24 family. In terms of assembly, component of the nucleoplasmic and cytoplasmic pre-60S ribosomal particles.

It is found in the cytoplasm. It localises to the nucleus. Probable metalloprotease involved in proper assembly of pre-ribosomal particles during the biogenesis of the 60S ribosomal subunit. Accompanies the pre-60S particles to the cytoplasm. The protein is Probable metalloprotease ARX1 (ARX1) of Candida glabrata (strain ATCC 2001 / BCRC 20586 / JCM 3761 / NBRC 0622 / NRRL Y-65 / CBS 138) (Yeast).